The chain runs to 37 residues: Large ribosomal subunit protein bL36c (37 aa).

It belongs to the bacterial ribosomal protein bL36 family.

It localises to the plastid. The protein resides in the chloroplast. This is Large ribosomal subunit protein bL36c from Lactuca sativa (Garden lettuce).